A 136-amino-acid polypeptide reads, in one-letter code: ATP synthase epsilon chain (136 aa).

The segment at 88–136 (DASSAESDLQAARNEVSKMEGQPASADKVKAQQSLDRARARVQAAKNQD) is disordered.

This sequence belongs to the ATPase epsilon chain family. F-type ATPases have 2 components, CF(1) - the catalytic core - and CF(0) - the membrane proton channel. CF(1) has five subunits: alpha(3), beta(3), gamma(1), delta(1), epsilon(1). CF(0) has three main subunits: a, b and c.

The protein resides in the cellular thylakoid membrane. In terms of biological role, produces ATP from ADP in the presence of a proton gradient across the membrane. The sequence is that of ATP synthase epsilon chain from Synechococcus sp. (strain WH7803).